Here is a 156-residue protein sequence, read N- to C-terminus: ATP synthase subunit b (156 aa).

Residues 4 to 26 (GATFWGPMISFALFVWFTMKFVW) form a helical membrane-spanning segment.

Belongs to the ATPase B chain family. In terms of assembly, F-type ATPases have 2 components, F(1) - the catalytic core - and F(0) - the membrane proton channel. F(1) has five subunits: alpha(3), beta(3), gamma(1), delta(1), epsilon(1). F(0) has three main subunits: a(1), b(2) and c(10-14). The alpha and beta chains form an alternating ring which encloses part of the gamma chain. F(1) is attached to F(0) by a central stalk formed by the gamma and epsilon chains, while a peripheral stalk is formed by the delta and b chains.

The protein localises to the cell inner membrane. Functionally, f(1)F(0) ATP synthase produces ATP from ADP in the presence of a proton or sodium gradient. F-type ATPases consist of two structural domains, F(1) containing the extramembraneous catalytic core and F(0) containing the membrane proton channel, linked together by a central stalk and a peripheral stalk. During catalysis, ATP synthesis in the catalytic domain of F(1) is coupled via a rotary mechanism of the central stalk subunits to proton translocation. Component of the F(0) channel, it forms part of the peripheral stalk, linking F(1) to F(0). This is ATP synthase subunit b from Halorhodospira halophila (strain DSM 244 / SL1) (Ectothiorhodospira halophila (strain DSM 244 / SL1)).